Here is a 509-residue protein sequence, read N- to C-terminus: Cobyric acid synthase (509 aa).

The GATase cobBQ-type domain maps to 262–459 (EIKVGIIKLP…IHGIFENDSW (198 aa)). C343 functions as the Nucleophile in the catalytic mechanism. H451 is a catalytic residue.

This sequence belongs to the CobB/CobQ family. CobQ subfamily.

Its pathway is cofactor biosynthesis; adenosylcobalamin biosynthesis. In terms of biological role, catalyzes amidations at positions B, D, E, and G on adenosylcobyrinic A,C-diamide. NH(2) groups are provided by glutamine, and one molecule of ATP is hydrogenolyzed for each amidation. The polypeptide is Cobyric acid synthase (Prochlorococcus marinus (strain MIT 9301)).